The primary structure comprises 220 residues: Protein US2 homolog (220 aa).

This sequence belongs to the herpesviridae US2 family.

The chain is Protein US2 homolog from Bovine herpesvirus 1.2 (strain ST) (BoHV-1).